The primary structure comprises 377 residues: tRNA(Met) cytidine acetate ligase (377 aa).

ATP-binding positions include 7-20 (VVEYNPFHNGHRYH), glycine 101, asparagine 151, and arginine 176.

The protein belongs to the TmcAL family.

The protein resides in the cytoplasm. The enzyme catalyses cytidine(34) in elongator tRNA(Met) + acetate + ATP = N(4)-acetylcytidine(34) in elongator tRNA(Met) + AMP + diphosphate. Catalyzes the formation of N(4)-acetylcytidine (ac(4)C) at the wobble position of elongator tRNA(Met), using acetate and ATP as substrates. First activates an acetate ion to form acetyladenylate (Ac-AMP) and then transfers the acetyl group to tRNA to form ac(4)C34. The protein is tRNA(Met) cytidine acetate ligase of Limosilactobacillus reuteri (strain DSM 20016) (Lactobacillus reuteri).